The primary structure comprises 407 residues: Proteasome-activating nucleotidase (407 aa).

Positions 22 to 67 form a coiled coil; the sequence is KEKAYLAELESKVLRLELKNKDITRENVQIKKENEILKRELDKLRI. Residues 192–197 and His-331 each bind ATP; that span reads GTGKTL. The interval 405-407 is docks into pockets in the proteasome alpha-ring to cause gate opening; the sequence is MYG.

The protein belongs to the AAA ATPase family. In terms of assembly, homohexamer. The hexameric complex has a two-ring architecture resembling a top hat that caps the 20S proteasome core at one or both ends. Upon ATP-binding, the C-terminus of PAN interacts with the alpha-rings of the proteasome core by binding to the intersubunit pockets.

Its subcellular location is the cytoplasm. ATPase which is responsible for recognizing, binding, unfolding and translocation of substrate proteins into the archaeal 20S proteasome core particle. Is essential for opening the gate of the 20S proteasome via an interaction with its C-terminus, thereby allowing substrate entry and access to the site of proteolysis. Thus, the C-termini of the proteasomal ATPase function like a 'key in a lock' to induce gate opening and therefore regulate proteolysis. Unfolding activity requires energy from ATP hydrolysis, whereas ATP binding alone promotes ATPase-20S proteasome association which triggers gate opening, and supports translocation of unfolded substrates. In Methanococcus vannielii (strain ATCC 35089 / DSM 1224 / JCM 13029 / OCM 148 / SB), this protein is Proteasome-activating nucleotidase.